A 173-amino-acid chain; its full sequence is Ribosome maturation factor RimM (173 aa).

A PRC barrel domain is found at 98–170 (VGDMTWDSFI…SLTVSLPEGL (73 aa)).

This sequence belongs to the RimM family. In terms of assembly, binds ribosomal protein uS19.

The protein resides in the cytoplasm. Functionally, an accessory protein needed during the final step in the assembly of 30S ribosomal subunit, possibly for assembly of the head region. Essential for efficient processing of 16S rRNA. May be needed both before and after RbfA during the maturation of 16S rRNA. It has affinity for free ribosomal 30S subunits but not for 70S ribosomes. In Parabacteroides distasonis (strain ATCC 8503 / DSM 20701 / CIP 104284 / JCM 5825 / NCTC 11152), this protein is Ribosome maturation factor RimM.